The chain runs to 95 residues: Aspartyl/glutamyl-tRNA(Asn/Gln) amidotransferase subunit C (95 aa).

The protein belongs to the GatC family. As to quaternary structure, heterotrimer of A, B and C subunits.

It carries out the reaction L-glutamyl-tRNA(Gln) + L-glutamine + ATP + H2O = L-glutaminyl-tRNA(Gln) + L-glutamate + ADP + phosphate + H(+). The enzyme catalyses L-aspartyl-tRNA(Asn) + L-glutamine + ATP + H2O = L-asparaginyl-tRNA(Asn) + L-glutamate + ADP + phosphate + 2 H(+). Allows the formation of correctly charged Asn-tRNA(Asn) or Gln-tRNA(Gln) through the transamidation of misacylated Asp-tRNA(Asn) or Glu-tRNA(Gln) in organisms which lack either or both of asparaginyl-tRNA or glutaminyl-tRNA synthetases. The reaction takes place in the presence of glutamine and ATP through an activated phospho-Asp-tRNA(Asn) or phospho-Glu-tRNA(Gln). This Methylobacillus flagellatus (strain ATCC 51484 / DSM 6875 / VKM B-1610 / KT) protein is Aspartyl/glutamyl-tRNA(Asn/Gln) amidotransferase subunit C.